Reading from the N-terminus, the 2210-residue chain is Mediator of RNA polymerase II transcription subunit 13-like (2210 aa).

The span at 391 to 400 shows a compositional bias: polar residues; the sequence is SKRSQMSTPT. Disordered stretches follow at residues 391 to 414, 435 to 489, and 519 to 582; these read SKRS…TWDF, AVGP…PFHH, and VSSS…NPAL. The segment covering 445–458 has biased composition (low complexity); it reads SQPGFSAGPSSSSS. Positions 468 to 480 are enriched in basic and acidic residues; that stretch reads KTAERQEKGDKLQ. Polar residues predominate over residues 533–544; sequence SRNTSKQMNLNP. Pro residues predominate over residues 551-560; that stretch reads PISPLPPTLS. Residues S553 and S560 each carry the phosphoserine modification. The short motif at 669-673 is the LXXLL motif 1 element; the sequence is LQRLL. The segment covering 736–752 has biased composition (basic and acidic residues); that stretch reads GTEKDSLKKNKSEDGFG. The interval 736–770 is disordered; that stretch reads GTEKDSLKKNKSEDGFGTKDVTTPGHSTPVPDGKN. Residues S817, S826, and S923 each carry the phosphoserine modification. The segment at 1016-1096 is disordered; it reads PQMNTPVTLN…STTRPLNSVE (81 aa). The span at 1025–1036 shows a compositional bias: low complexity; that stretch reads NSAAPASNSGAG. Polar residues predominate over residues 1077–1092; sequence TDQGSPASTPSTTRPL. Positions 1225–1229 match the LXXLL motif 2 motif; sequence LLLLL. The tract at residues 1380-1401 is leucine-zipper; that stretch reads LPIPTLLVGYDKDFLTISPFSL. 2 disordered regions span residues 1530 to 1656 and 2045 to 2080; these read QTPP…VTER and GNLH…QGER. Over residues 1531-1608 the composition is skewed to low complexity; sequence TPPAAAQGQA…ISTTSSSGFS (78 aa). A compositionally biased stretch (polar residues) spans 1615 to 1629; the sequence is NPSTGGISADRTQGN. The span at 1637 to 1650 shows a compositional bias: low complexity; that stretch reads DPGQSSSQPSQDGQ. S2083 carries the post-translational modification Phosphoserine.

The protein belongs to the Mediator complex subunit 13 family. As to quaternary structure, component of the Mediator complex, which is composed of MED1, MED4, MED6, MED7, MED8, MED9, MED10, MED11, MED12, MED13, MED13L, MED14, MED15, MED16, MED17, MED18, MED19, MED20, MED21, MED22, MED23, MED24, MED25, MED26, MED27, MED29, MED30, MED31, CCNC, CDK8 and CDC2L6/CDK11. The MED12, MED13, CCNC and CDK8 subunits form a distinct module termed the CDK8 module. Mediator containing the CDK8 module is less active than Mediator lacking this module in supporting transcriptional activation. Individual preparations of the Mediator complex lacking one or more distinct subunits have been variously termed ARC, CRSP, DRIP, PC2, SMCC and TRAP. As to expression, highly expressed in brain (cerebellum), heart (aorta), skeletal muscle, kidney, placenta and peripheral blood leukocytes. Highly expressed in fetal brain.

It localises to the nucleus. Functionally, component of the Mediator complex, a coactivator involved in the regulated transcription of nearly all RNA polymerase II-dependent genes. Mediator functions as a bridge to convey information from gene-specific regulatory proteins to the basal RNA polymerase II transcription machinery. Mediator is recruited to promoters by direct interactions with regulatory proteins and serves as a scaffold for the assembly of a functional preinitiation complex with RNA polymerase II and the general transcription factors. This subunit may specifically regulate transcription of targets of the Wnt signaling pathway and SHH signaling pathway. This chain is Mediator of RNA polymerase II transcription subunit 13-like (MED13L), found in Homo sapiens (Human).